The sequence spans 942 residues: Calcium-activated chloride channel regulator 2 (942 aa).

An N-terminal signal peptide occupies residues 1-32; the sequence is MTHRDSTGPVIGLKLVTLLFTLSPELLFLGAG. Topologically, residues 33–905 are extracellular; it reads LKLKENGYDG…SRDDLILKGV (873 aa). The metalloprotease domain stretch occupies residues 54 to 205; it reads DLKLITNIKE…CSSDITGVFV (152 aa). Asparagine 74 and asparagine 97 each carry an N-linked (GlcNAc...) asparagine glycan. Position 164 (histidine 164) interacts with Zn(2+). Glutamate 165 is a catalytic residue. Positions 168 and 175 each coordinate Zn(2+). Residues asparagine 231, asparagine 235, asparagine 254, and asparagine 286 are each glycosylated (N-linked (GlcNAc...) asparagine). The region spanning 311–483 is the VWFA domain; that stretch reads VVCLVIDVSR…NGMTEAFVRI (173 aa). N-linked (GlcNAc...) asparagine glycans are attached at residues asparagine 522, asparagine 580, asparagine 637, and asparagine 821. Residues 906-926 form a helical membrane-spanning segment; sequence LTTVGLIAILCLIMVVAHCIF. Residues 927–942 are Cytoplasmic-facing; sequence NRKKRPSRKENETKFL.

This sequence belongs to the CLCR family. The translation product is autoproteolytically cleaved by the metalloprotease domain in the endoplasmic reticulum into a N-terminal and a C-terminal products that remain physically associated with each other. The cleavage is necessary for calcium-activated chloride channel (CaCC) activation activity. Post-translationally, N-glycosylated. As to expression, highly expressed in eye, spleen, lung, kidney, uterus, and endothelial cells. Weakly expressed in heart and throughout the gastrointestinal tract. Highly expressed in mammary cell lines. Its expression in immortalized cell line HC11 correlates with slow or arrested growth. Re-expression in mammary tumor cells reduces colony survival.

The protein resides in the cell membrane. It is found in the basal cell membrane. It localises to the cell junction. In terms of biological role, plays a role in modulating chloride current across the plasma membrane in a calcium-dependent manner, and cell adhesion. Involved in basal cell adhesion and/or stratification of squamous epithelia. May act as a tumor suppressor in breast and colorectal cancer. Plays a key role for cell adhesion in the beginning stages of lung metastasis via the binding to ITGB4. This chain is Calcium-activated chloride channel regulator 2 (Clca2), found in Mus musculus (Mouse).